A 475-amino-acid polypeptide reads, in one-letter code: Ribulose bisphosphate carboxylase large chain (475 aa).

A propeptide spanning residues 1-2 is cleaved from the precursor; sequence MA. P3 is modified (N-acetylproline). Substrate contacts are provided by N123 and T173. K175 acts as the Proton acceptor in catalysis. K177 is a substrate binding site. K201, D203, and E204 together coordinate Mg(2+). An N6-carboxylysine modification is found at K201. The Proton acceptor role is filled by H294. 3 residues coordinate substrate: R295, H327, and S379.

The protein belongs to the RuBisCO large chain family. Type I subfamily. As to quaternary structure, heterohexadecamer of 8 large chains and 8 small chains. It depends on Mg(2+) as a cofactor.

The protein resides in the plastid. It is found in the chloroplast. It carries out the reaction 2 (2R)-3-phosphoglycerate + 2 H(+) = D-ribulose 1,5-bisphosphate + CO2 + H2O. It catalyses the reaction D-ribulose 1,5-bisphosphate + O2 = 2-phosphoglycolate + (2R)-3-phosphoglycerate + 2 H(+). Functionally, ruBisCO catalyzes two reactions: the carboxylation of D-ribulose 1,5-bisphosphate, the primary event in carbon dioxide fixation, as well as the oxidative fragmentation of the pentose substrate in the photorespiration process. Both reactions occur simultaneously and in competition at the same active site. This is Ribulose bisphosphate carboxylase large chain from Ostreococcus tauri.